The primary structure comprises 293 residues: ATP synthase gamma chain (293 aa).

The protein belongs to the ATPase gamma chain family. F-type ATPases have 2 components, CF(1) - the catalytic core - and CF(0) - the membrane proton channel. CF(1) has five subunits: alpha(3), beta(3), gamma(1), delta(1), epsilon(1). CF(0) has three main subunits: a, b and c.

Its subcellular location is the cell membrane. In terms of biological role, produces ATP from ADP in the presence of a proton gradient across the membrane. The gamma chain is believed to be important in regulating ATPase activity and the flow of protons through the CF(0) complex. The chain is ATP synthase gamma chain from Streptococcus sanguinis.